A 336-amino-acid chain; its full sequence is MEAIAYSLAFTFLKIVIVFSLALGIGAYLTWFERKLAGHIQNRLGPTVVGKFGILQPLADALKLATKEVIIPRGADKPVYYAAVVMALVPSILLLTIIPFGPGFRVGNTYIEPIIADVNIALLLAFAFGSLSVYGTIFSGWASNSKYAFIGSLRKAAVVIAYEVVLGFSVLGVILLAGTLSTVGIVEAQIQKGVWFIFYQPVAFILYLFCMLAESGRVPFDIQEAEAELVTGYNVEYGGMKFGAFPLAEWYVNVIALSAIAVVLFFGGWDGPHIFGPLSPYFWFVFKTFALVFFTLWLHWTLPRFQAKDITEIAWKILLPIAILNVIITAVVVYAF.

8 consecutive transmembrane segments (helical) span residues 12 to 32 (FLKI…LTWF), 84 to 104 (VVMA…GPGF), 118 to 138 (VNIA…GTIF), 156 to 176 (AAVV…VILL), 193 to 213 (GVWF…CMLA), 247 to 267 (LAEW…LFFG), 274 to 294 (IFGP…LVFF), and 313 to 333 (IAWK…AVVV).

This sequence belongs to the complex I subunit 1 family. In terms of assembly, NDH-1 is composed of 14 different subunits. Subunits NuoA, H, J, K, L, M, N constitute the membrane sector of the complex.

It localises to the cell inner membrane. It carries out the reaction a quinone + NADH + 5 H(+)(in) = a quinol + NAD(+) + 4 H(+)(out). NDH-1 shuttles electrons from NADH, via FMN and iron-sulfur (Fe-S) centers, to quinones in the respiratory chain. The immediate electron acceptor for the enzyme in this species is believed to be ubiquinone. Couples the redox reaction to proton translocation (for every two electrons transferred, four hydrogen ions are translocated across the cytoplasmic membrane), and thus conserves the redox energy in a proton gradient. This subunit may bind ubiquinone. The polypeptide is NADH-quinone oxidoreductase subunit H (Aquifex aeolicus (strain VF5)).